Here is a 779-residue protein sequence, read N- to C-terminus: Phosphoribosylformylglycinamidine synthase subunit PurL (779 aa).

His-52 is a catalytic residue. Residues Tyr-55 and Lys-94 each contribute to the ATP site. Residue Glu-96 coordinates Mg(2+). Substrate contacts are provided by residues 97–100 and Arg-119; that span reads SHNH. The active-site Proton acceptor is the His-98. Asp-120 serves as a coordination point for Mg(2+). Gln-243 is a binding site for substrate. Position 271 (Asp-271) interacts with Mg(2+). 315-317 contacts substrate; sequence ESQ. Residues Asn-523 and Gly-560 each contribute to the ATP site. Residue Asn-561 coordinates Mg(2+). Residue Ser-563 participates in substrate binding.

Belongs to the FGAMS family. In terms of assembly, monomer. Part of the FGAM synthase complex composed of 1 PurL, 1 PurQ and 2 PurS subunits.

Its subcellular location is the cytoplasm. The enzyme catalyses N(2)-formyl-N(1)-(5-phospho-beta-D-ribosyl)glycinamide + L-glutamine + ATP + H2O = 2-formamido-N(1)-(5-O-phospho-beta-D-ribosyl)acetamidine + L-glutamate + ADP + phosphate + H(+). Its pathway is purine metabolism; IMP biosynthesis via de novo pathway; 5-amino-1-(5-phospho-D-ribosyl)imidazole from N(2)-formyl-N(1)-(5-phospho-D-ribosyl)glycinamide: step 1/2. Its function is as follows. Part of the phosphoribosylformylglycinamidine synthase complex involved in the purines biosynthetic pathway. Catalyzes the ATP-dependent conversion of formylglycinamide ribonucleotide (FGAR) and glutamine to yield formylglycinamidine ribonucleotide (FGAM) and glutamate. The FGAM synthase complex is composed of three subunits. PurQ produces an ammonia molecule by converting glutamine to glutamate. PurL transfers the ammonia molecule to FGAR to form FGAM in an ATP-dependent manner. PurS interacts with PurQ and PurL and is thought to assist in the transfer of the ammonia molecule from PurQ to PurL. In Prochlorococcus marinus subsp. pastoris (strain CCMP1986 / NIES-2087 / MED4), this protein is Phosphoribosylformylglycinamidine synthase subunit PurL.